The primary structure comprises 67 residues: ATP synthase protein 8 (67 aa).

A helical membrane pass occupies residues 8–24 (TWFTTVLSTTITLFILM). Lysine 54 is modified (N6-acetyllysine; alternate). N6-succinyllysine; alternate is present on lysine 54. Position 57 is an N6-acetyllysine (lysine 57).

Belongs to the ATPase protein 8 family. In terms of assembly, F-type ATPases have 2 components, CF(1) - the catalytic core - and CF(0) - the membrane proton channel. Component of an ATP synthase complex composed of ATP5PB, ATP5MC1, ATP5F1E, ATP5PD, ATP5ME, ATP5PF, ATP5MF, MT-ATP6, MT-ATP8, ATP5F1A, ATP5F1B, ATP5F1D, ATP5F1C, ATP5PO, ATP5MG, ATP5MK and ATP5MJ. Interacts with PRICKLE3.

It is found in the mitochondrion membrane. Its function is as follows. Mitochondrial membrane ATP synthase (F(1)F(0) ATP synthase or Complex V) produces ATP from ADP in the presence of a proton gradient across the membrane which is generated by electron transport complexes of the respiratory chain. F-type ATPases consist of two structural domains, F(1) - containing the extramembraneous catalytic core and F(0) - containing the membrane proton channel, linked together by a central stalk and a peripheral stalk. During catalysis, ATP synthesis in the catalytic domain of F(1) is coupled via a rotary mechanism of the central stalk subunits to proton translocation. Part of the complex F(0) domain. Minor subunit located with subunit a in the membrane. This Microtus pennsylvanicus (Meadow vole) protein is ATP synthase protein 8 (MT-ATP8).